The primary structure comprises 284 residues: RNA polymerase sigma factor RpoH (284 aa).

Residues 53–122 (LILSHLRFVV…IHEYVLRNWR (70 aa)) are sigma-70 factor domain-2. The Interaction with polymerase core subunit RpoC motif lies at 77–80 (DLIQ). The interval 228-280 (AMQGLDERSQDIIRARWLDEDNKSTLQELADRYGVSAERVRQLEKNAMKKLRA) is sigma-70 factor domain-4. Residues 253 to 272 (LQELADRYGVSAERVRQLEK) constitute a DNA-binding region (H-T-H motif).

Belongs to the sigma-70 factor family. RpoH subfamily. As to quaternary structure, interacts with the RNA polymerase core enzyme.

The protein resides in the cytoplasm. Sigma factors are initiation factors that promote the attachment of RNA polymerase to specific initiation sites and are then released. This sigma factor is involved in regulation of expression of heat shock genes. This is RNA polymerase sigma factor RpoH from Escherichia coli O6:H1 (strain CFT073 / ATCC 700928 / UPEC).